The primary structure comprises 628 residues: Very-long-chain aldehyde decarbonylase GL1-2 (628 aa).

Transmembrane regions (helical) follow at residues 37-57, 131-151, 191-211, 299-319, and 331-351; these read GAAP…ARGL, GWAI…YWAH, VVIG…VGLV, DFVF…PFVL, and FVLL…WCCS. The Fatty acid hydroxylase domain occupies 137 to 277; it reads LLHVLVAEPL…MPIFDLLGGT (141 aa).

This sequence belongs to the sterol desaturase family. As to quaternary structure, homodimer.

Its subcellular location is the endoplasmic reticulum membrane. It catalyses the reaction a long-chain fatty aldehyde + 2 NADPH + O2 + H(+) = a long-chain alkane + formate + 2 NADP(+) + H2O. Functionally, aldehyde decarbonylase involved in the conversion of aldehydes to alkanes. Core component of a very-long-chain alkane synthesis complex. The polypeptide is Very-long-chain aldehyde decarbonylase GL1-2 (Oryza sativa subsp. indica (Rice)).